Consider the following 598-residue polypeptide: Aspartate--tRNA(Asp/Asn) ligase (598 aa).

Residue Glu177 coordinates L-aspartate. The interval 201-204 (QLFK) is aspartate. Position 223 (Arg223) interacts with L-aspartate. ATP-binding positions include 223–225 (RDE) and Gln232. Residue His456 participates in L-aspartate binding. An ATP-binding site is contributed by Glu493. Residue Arg500 coordinates L-aspartate. Residue 545-548 (GVDR) coordinates ATP.

Belongs to the class-II aminoacyl-tRNA synthetase family. Type 1 subfamily. In terms of assembly, homodimer.

The protein localises to the cytoplasm. The enzyme catalyses tRNA(Asx) + L-aspartate + ATP = L-aspartyl-tRNA(Asx) + AMP + diphosphate. Aspartyl-tRNA synthetase with relaxed tRNA specificity since it is able to aspartylate not only its cognate tRNA(Asp) but also tRNA(Asn). Reaction proceeds in two steps: L-aspartate is first activated by ATP to form Asp-AMP and then transferred to the acceptor end of tRNA(Asp/Asn). The polypeptide is Aspartate--tRNA(Asp/Asn) ligase (Prochlorococcus marinus subsp. pastoris (strain CCMP1986 / NIES-2087 / MED4)).